The following is a 783-amino-acid chain: Na(+)/H(+) exchanger protein 7 (783 aa).

The helical transmembrane segment at 1-18 threads the bilayer; the sequence is MWIKLLFFFTTLLVSTSG. Residues 19–108 are Extracellular-facing; that stretch reads LGDDGITALL…WHWDYVKNEL (90 aa). Residues 109 to 129 form a helical membrane-spanning segment; sequence VLTLFFIVIGLFKLVYHHTFV. Residues 130-132 lie on the Cytoplasmic side of the membrane; it reads TRK. Residues 133 to 153 form a helical membrane-spanning segment; sequence ILPESCCLIFIGIAIGFFFVG. Over 154–159 the chain is Extracellular; it reads DATHAS. A helical transmembrane segment spans residues 160–180; it reads IKFLEFKSKVFFFYLLPPIIL. Over 181 to 206 the chain is Cytoplasmic; it reads ESAYSLKDRAFIENIGTILLYAVVGT. Residues 207–227 form a helical membrane-spanning segment; it reads ILNIVLLAAALLILIWVGIMG. Residues 228-235 are Extracellular-facing; the sequence is KYNLSVMD. Residues 236 to 256 form a helical membrane-spanning segment; that stretch reads ILTFASLVAAVDPVAVLAVFQ. Residues 257–262 are Cytoplasmic-facing; sequence EVGVNK. A helical membrane pass occupies residues 263-283; sequence MLYFMVFGESLFNDAVTIVCY. Residues 284–299 lie on the Extracellular side of the membrane; the sequence is NLAIEFQTLPDFTWYH. A helical membrane pass occupies residues 300–320; it reads GFLGLLSFLCVSIGGLIIGLI. Residues 321–350 are Cytoplasmic-facing; it reads CGAISSFVTKFTTDVRVVEPVVLFGMAYLA. Residues 351–371 form a helical membrane-spanning segment; it reads YLGSEMFHFSGIIALIACGLF. Residues 372–390 lie on the Extracellular side of the membrane; the sequence is QTHYACCNISYKSFTSVMY. N-linked (GlcNAc...) asparagine glycosylation occurs at Asn-379. Positions 391–411 form an intramembrane region, helical; sequence ITKVCSTLCESLIFIILGVML. At 412-424 the chain is on the extracellular side; sequence VNEREWFWTDWHP. A helical transmembrane segment spans residues 425–445; sequence VFSAVSVVLCVVVRFGVTFFL. Over 446–464 the chain is Cytoplasmic; the sequence is TYFVNQFTGGVRHISFQEQ. A helical transmembrane segment spans residues 465–485; sequence FIMSYGGLRGAVSFSLVFMIS. Topologically, residues 486–492 are extracellular; the sequence is ANPDVKN. The helical transmembrane segment at 493–513 threads the bilayer; sequence TMLGATYAVILFTNIIQGSTI. At 514-783 the chain is on the cytoplasmic side; it reads KLFVKWLNIR…TITESEETSF (270 aa). The stretch at 649 to 702 forms a coiled coil; the sequence is DNEDADQRANELIKDVSSIRQLMHNPFEDCYLDRNLTHEEEKEQARLKMKKTRA. The disordered stretch occupies residues 745-783; that stretch reads RPSTSTRVSVEDEEQGLTMKEMEEEHPLMTITESEETSF.

The protein belongs to the monovalent cation:proton antiporter 1 (CPA1) transporter (TC 2.A.36) family. Interacts (via C-terminus) with cmd-1. As to expression, detected in the posterior cells of the intestine.

It is found in the basolateral cell membrane. In terms of biological role, na+/H+ exchanger which mediates the transient acidification of the coelomic space and plays a role in contraction of posterior body muscles during defecation. Probably by regulating the defecation motor program, required for fatty acid uptake by intestinal cells. The sequence is that of Na(+)/H(+) exchanger protein 7 from Caenorhabditis elegans.